A 404-amino-acid chain; its full sequence is Pre-heme d1 synthase (404 aa).

The Radical SAM core domain occupies 22-235 (GTPKPVVIWN…LIARALESAE (214 aa)). [4Fe-4S] cluster-binding residues include C36, C40, C43, C340, C343, C349, and C371.

The protein belongs to the radical SAM superfamily. [4Fe-4S] cluster is required as a cofactor.

It functions in the pathway porphyrin-containing compound metabolism. Functionally, involved in heme d1 biosynthesis. Radical SAM enzyme that catalyzes the removal of two propionate side chains from the intermediate 12,18-didecarboxysiroheme (DDSH) and may introduce the keto functions on rings A and B, yielding the heme d1 precursor dihydro-heme d1. The chain is Pre-heme d1 synthase from Dinoroseobacter shibae (strain DSM 16493 / NCIMB 14021 / DFL 12).